The primary structure comprises 262 residues: Hydroxyethylthiazole kinase (262 aa).

Residue Met-50 coordinates substrate. ATP contacts are provided by Arg-125 and Thr-171. Gly-198 is a substrate binding site.

This sequence belongs to the Thz kinase family. Mg(2+) serves as cofactor.

The enzyme catalyses 5-(2-hydroxyethyl)-4-methylthiazole + ATP = 4-methyl-5-(2-phosphooxyethyl)-thiazole + ADP + H(+). It functions in the pathway cofactor biosynthesis; thiamine diphosphate biosynthesis; 4-methyl-5-(2-phosphoethyl)-thiazole from 5-(2-hydroxyethyl)-4-methylthiazole: step 1/1. Catalyzes the phosphorylation of the hydroxyl group of 4-methyl-5-beta-hydroxyethylthiazole (THZ). In Escherichia coli O45:K1 (strain S88 / ExPEC), this protein is Hydroxyethylthiazole kinase.